Here is a 430-residue protein sequence, read N- to C-terminus: D-galactonate transporter (430 aa).

The Cytoplasmic portion of the chain corresponds to 1-17; sequence MDIPVNAAKPGRRRYLT. Residues 18 to 39 form a helical membrane-spanning segment; sequence LVMIFITVVICYVDRANLAVAS. Residues tyrosine 29 and arginine 32 each contribute to the D-galactonate site. Over 40–50 the chain is Periplasmic; the sequence is AHIQEEFGITK. A helical transmembrane segment spans residues 51–74; that stretch reads AEMGYVFSAFAWLYTLCQIPGGWF. Tyrosine 64 contributes to the D-galactonate binding site. Residues 75-81 are Cytoplasmic-facing; it reads LDRVGSR. The chain crosses the membrane as a helical span at residues 82–100; that stretch reads VTYFIAIFGWSVATLFQGF. The Periplasmic segment spans residues 101 to 103; the sequence is ATG. A helical membrane pass occupies residues 104-125; it reads LMSLIGLRAITGIFEAPAFPTN. Topologically, residues 126-141 are cytoplasmic; sequence NRMVTSWFPEHERASA. The chain crosses the membrane as a helical span at residues 142-164; sequence VGFYTSGQFVGLAFLTPLLIWIQ. The Periplasmic portion of the chain corresponds to 165-168; sequence EMLS. A helical transmembrane segment spans residues 169–190; the sequence is WHWVFIVTGGIGIIWSLIWFKV. The Cytoplasmic portion of the chain corresponds to 191 to 241; the sequence is YQPPRLTKGISKAELDYIRDGGGLVDGDAPVKKEARQPLTAKDWKLVFHRK. Residues 242 to 267 traverse the membrane as a helical segment; sequence LIGVYLGQFAVASTLWFFLTWFPNYL. Residues 268 to 276 are Periplasmic-facing; sequence TQEKGITAL. A helical membrane pass occupies residues 277–297; it reads KAGFMTTVPFLAAFVGVLLSG. The Cytoplasmic portion of the chain corresponds to 298-314; sequence WVADLLVRKGFSLGFAR. Residues 315–333 traverse the membrane as a helical segment; it reads KTPIICGLLISTCIMGANY. The Periplasmic portion of the chain corresponds to 334–336; it reads TND. Residues 337-354 traverse the membrane as a helical segment; it reads PMMIMCLMALAFFGNGFA. Residues 355–373 lie on the Cytoplasmic side of the membrane; sequence SITWSLVSSLAPMRLIGLT. Tryptophan 358 is a binding site for D-galactonate. A helical transmembrane segment spans residues 374–395; sequence GGVFNFAGGLGGITVPLVVGYL. Over 396–400 the chain is Periplasmic; it reads AQGYG. The helical transmembrane segment at 401–423 threads the bilayer; that stretch reads FAPALVYISAVALIGALSYILLV. Over 424 to 430 the chain is Cytoplasmic; sequence GDVKRVG.

It belongs to the major facilitator superfamily. Phthalate permease family.

The protein resides in the cell inner membrane. The catalysed reaction is D-galactonate(in) + H(+)(in) = D-galactonate(out) + H(+)(out). Functionally, involved in D-galactonate metabolism. Catalyzes the proton-dependent uptake of galactonate into the cell. The sequence is that of D-galactonate transporter (dgoT) from Escherichia coli O6:H1 (strain CFT073 / ATCC 700928 / UPEC).